The sequence spans 786 residues: MSINLTIDICIYLLSNARNLCGKHRSKQLHLVCSPNHCWKIRHVSLQRGLHPHKVRCKWTKSETHSCSKHYYSPSNHGLHIGILKLSTSAPKGLTKVSIRMSRIKSTLNSVSKAVFGSQNEMISRLAQFKPSSRILRKVSDSGWLKQESIKQAIRSLKKYSDKSTEKSPVPEGRNHIIDKEDDIGKQSLFHYTGNITTKFGESFYFLSNHINSYFKRAEKMSQDKENSHFQEKSELEGKKVEEGKSSSLDPGILTSQADKPDPKSSAGTMDKATSPSGTPESLPISTKQSIANFLSRPTEGVQALVGGYIGGLVPKLKYDSKSQAEEQEEPAKSEPAGSKDKTVEEKKHLSLQREKIIARVSIDNRTRALVQALRRTADPKLCITRVEELTFHLLEFPEGKGVAVKERLIPCLLRLRQMKDETLQAAVREILALIGYVDPVKGRGIRILTIDGGGTRGVVALQTLRKLVELTQKPVHQLFDYICGVSTGAILAFMLGLFHLPLDECEELYRKLGSDIFSQNVIVGTVKMSWSHAFYDSQTWEKILKERMGSALMIETARNPMCPKVAAVSTIVNRGSTPKAFVFRNYGHFPGSQSHYLGGCQYKMWQAIRASSAAPGYFAEYALGNDLHQDGGLLLNNPSALAMHECKCLWPDAPLECIVSLGTGRYESDVRNNTTYTSLKTKLSNVINSATDTEEVHIMLDGLLPPDTYFRFNPVMCENIPLDESRNEKLDQLQLEGSKYIERNEHKMKKVAKILSQEKTTLQKINDWIKLKTDMYEGLPFFSKL.

An N-linked (GlcNAc...) asparagine glycan is attached at asparagine 4. 3 disordered regions span residues 158 to 180 (KKYS…IIDK), 225 to 285 (KENS…SLPI), and 321 to 348 (SKSQ…EEKK). The segment covering 225–245 (KENSHFQEKSELEGKKVEEGK) has biased composition (basic and acidic residues). Polar residues-rich tracts occupy residues 246–258 (SSSL…TSQA) and 266–285 (SAGT…SLPI). The PNPLA domain occupies 449–644 (LTIDGGGTRG…LLNNPSALAM (196 aa)). The GXGXXG signature appears at 453 to 458 (GGGTRG). Residues 483 to 503 (ICGVSTGAILAFMLGLFHLPL) form a helical membrane-spanning segment. Positions 485–489 (GVSTG) match the GXSXG motif. Serine 487 (nucleophile) is an active-site residue. The active-site Proton acceptor is the aspartate 631. Residues 631 to 633 (DGG) carry the DGA/G motif. Lysine 740 is modified (N6-succinyllysine).

Expressed in kidney, heart and brain.

It localises to the endoplasmic reticulum membrane. The protein resides in the mitochondrion membrane. Its subcellular location is the peroxisome membrane. It catalyses the reaction a 1,2-diacyl-sn-glycero-3-phosphocholine + H2O = a 1-acyl-sn-glycero-3-phosphocholine + a fatty acid + H(+). It carries out the reaction a 1,2-diacyl-sn-glycero-3-phosphocholine + H2O = a 2-acyl-sn-glycero-3-phosphocholine + a fatty acid + H(+). The enzyme catalyses a 1,2-diacyl-sn-glycero-3-phosphoethanolamine + H2O = a 1-acyl-sn-glycero-3-phosphoethanolamine + a fatty acid + H(+). The catalysed reaction is a 1-O-(1Z-alkenyl)-2-acyl-sn-glycero-3-phosphocholine + H2O = a 1-O-(1Z-alkenyl)-sn-glycero-3-phosphocholine + a fatty acid + H(+). It catalyses the reaction a 1-acyl-sn-glycero-3-phosphocholine + H2O = sn-glycerol 3-phosphocholine + a fatty acid + H(+). It carries out the reaction 1-acyl-2-(9Z,12Z)-octadecadienoyl-sn-glycero-3-phosphocholine + H2O = a 1-acyl-sn-glycero-3-phosphocholine + (9Z,12Z)-octadecadienoate + H(+). The enzyme catalyses 1-acyl-2-(5Z,8Z,11Z,14Z-eicosatetraenoyl)-sn-glycero-3-phosphocholine + H2O = a 1-acyl-sn-glycero-3-phosphocholine + (5Z,8Z,11Z,14Z)-eicosatetraenoate + H(+). The catalysed reaction is 1-hexadecanoyl-2-(5Z,8Z,11Z,14Z-eicosatetraenoyl)-sn-glycero-3-phosphocholine + H2O = 1-hexadecanoyl-sn-glycero-3-phosphocholine + (5Z,8Z,11Z,14Z)-eicosatetraenoate + H(+). It catalyses the reaction 1-octadecanoyl-2-(9Z-octadecenoyl)-sn-glycero-3-phosphocholine + H2O = 1-octadecanoyl-sn-glycero-3-phosphocholine + (9Z)-octadecenoate + H(+). It carries out the reaction 1-hexadecanoyl-2-(9Z-octadecenoyl)-sn-glycero-3-phosphocholine + H2O = 1-hexadecanoyl-sn-glycero-3-phosphocholine + (9Z)-octadecenoate + H(+). The enzyme catalyses 1-hexadecanoyl-2-(9Z,12Z-octadecadienoyl)-sn-glycero-3-phosphocholine + H2O = (9Z,12Z)-octadecadienoate + 1-hexadecanoyl-sn-glycero-3-phosphocholine + H(+). The catalysed reaction is 1-acyl-2-(9Z,12Z)-octadecadienoyl-sn-glycero-3-phosphoethanolamine + H2O = a 1-acyl-sn-glycero-3-phosphoethanolamine + (9Z,12Z)-octadecadienoate + H(+). It catalyses the reaction 1-acyl-2-(5Z,8Z,11Z,14Z)-eicosatetraenoyl-sn-glycero-3-phosphoethanolamine + H2O = a 1-acyl-sn-glycero-3-phosphoethanolamine + (5Z,8Z,11Z,14Z)-eicosatetraenoate + H(+). It carries out the reaction 1-hexadecanoyl-2-(5Z,8Z,11Z,14Z-eicosatetraenoyl)-sn-glycero-3-phosphoethanolamine + H2O = 1-hexadecanoyl-sn-glycero-3-phosphoethanolamine + (5Z,8Z,11Z,14Z)-eicosatetraenoate + H(+). The enzyme catalyses 1-hexadecanoyl-2-(5Z,8Z,11Z,14Z-eicosatetraenoyl)-sn-glycero-3-phosphocholine + H2O = 2-(5Z,8Z,11Z,14Z)-eicosatetraenoyl-sn-glycero-3-phosphocholine + hexadecanoate + H(+). The catalysed reaction is 1-octadecanoyl-2-(9Z-octadecenoyl)-sn-glycero-3-phosphocholine + H2O = 2-(9Z-octadecenoyl)-sn-glycero-3-phosphocholine + octadecanoate + H(+). It catalyses the reaction 1-hexadecanoyl-2-(4Z,7Z,10Z,13Z,16Z,19Z-docosahexaenoyl)-sn-glycero-3-phosphocholine + H2O = 2-(4Z,7Z,10Z,13Z,16Z,19Z-docosahexaenoyl)-sn-glycero-3-phosphocholine + hexadecanoate + H(+). It carries out the reaction 1-O-(1Z)-hexadecenyl-2 (5Z,8Z,11Z,14Z)-eicosatetraenoyl-sn-glycero-3-phosphocholine + H2O = 1-(1Z-hexadecenyl)-sn-glycero-3-phosphocholine + (5Z,8Z,11Z,14Z)-eicosatetraenoate + H(+). The enzyme catalyses 1-O-(1Z-hexadecenyl)-2-(9Z-octadecenoyl)-sn-glycero-3-phosphocholine + H2O = 1-(1Z-hexadecenyl)-sn-glycero-3-phosphocholine + (9Z)-octadecenoate + H(+). The catalysed reaction is 1-hexadecanoyl-sn-glycero-3-phosphocholine + H2O = sn-glycerol 3-phosphocholine + hexadecanoate + H(+). It catalyses the reaction 1',3'-bis-[1,2-di-(9Z,12Z-octadecadienoyl)-sn-glycero-3-phospho]-glycerol + H2O = 1'-[1,2-di-(9Z,12Z-octadecadienoyl)-sn-glycero-3-phospho]-3'-[1-(9Z,12Z-octadecadienoyl)-sn-glycero-3-phospho]-glycerol + (9Z,12Z)-octadecadienoate + H(+). It carries out the reaction 1'-[1-acyl-2-(9-hydroxy-(10E,12Z)-octadecadienoyl)-sn-glycero-3-phospho]-3'-[1,2-diacyl-sn-glycero-3-phospho]-glycerol + H2O = 9-hydroxy-(10E,12Z)-octadecadienoate + 1'-[1,2-diacyl-sn-glycero-3-phospho],3'-[1-acyl-sn-glycero-3-phospho]-glycerol + H(+). Its pathway is phospholipid metabolism. Its activity is regulated as follows. Calcium-independent phospholipase. Functionally, calcium-independent and membrane-bound phospholipase, that catalyzes the esterolytic cleavage of fatty acids from glycerophospholipids to yield free fatty acids and lysophospholipids, hence regulating membrane physical properties and the release of lipid second messengers and growth factors. Hydrolyzes phosphatidylethanolamine, phosphatidylcholine and probably phosphatidylinositol with a possible preference for the former. Has also a broad substrate specificity in terms of fatty acid moieties, hydrolyzing saturated and mono-unsaturated fatty acids at nearly equal rates from either the sn-1 or sn-2 position in diacyl phosphatidylcholine. However, has a weak activity toward polyunsaturated fatty acids at the sn-2 position, and thereby favors the production of 2-arachidonoyl lysophosphatidylcholine, a key branch point metabolite in eicosanoid signaling. On the other hand, can produce arachidonic acid from the sn-1 position of diacyl phospholipid and from the sn-2 position of arachidonate-containing plasmalogen substrates. Therefore, plays an important role in the mobilization of arachidonic acid in response to cellular stimuli and the generation of lipid second messengers. Can also hydrolyze lysophosphatidylcholine. In the mitochondrial compartment, catalyzes the hydrolysis and release of oxidized aliphatic chains from cardiolipin and integrates mitochondrial bioenergetics and signaling. It is essential for maintaining efficient bioenergetic mitochondrial function through tailoring mitochondrial membrane lipid metabolism and composition. This Oryctolagus cuniculus (Rabbit) protein is Calcium-independent phospholipase A2-gamma.